The following is a 113-amino-acid chain: Hydrogenase maturation factor HybF (113 aa).

Ni(2+) contacts are provided by His2 and Glu3. Residues Cys73, Cys76, Cys89, and Cys92 each contribute to the Zn(2+) site.

It belongs to the HypA/HybF family. HybF subfamily.

In terms of biological role, involved in the maturation of [NiFe] hydrogenases. Required for nickel insertion into the metal center of the hydrogenase. In Escherichia coli O6:H1 (strain CFT073 / ATCC 700928 / UPEC), this protein is Hydrogenase maturation factor HybF.